Here is a 305-residue protein sequence, read N- to C-terminus: Glutaminase (305 aa).

Substrate is bound by residues Ser61, Asn113, Glu158, Asn165, Tyr189, Tyr241, and Val259.

This sequence belongs to the glutaminase family. In terms of assembly, homotetramer.

The catalysed reaction is L-glutamine + H2O = L-glutamate + NH4(+). In Clostridium botulinum (strain Loch Maree / Type A3), this protein is Glutaminase.